Here is a 376-residue protein sequence, read N- to C-terminus: Response regulator aspartate phosphatase H (376 aa).

TPR repeat units lie at residues 99 to 132, 139 to 172, 180 to 213, 220 to 253, 259 to 292, and 334 to 367; these read YYSL…LPFV, AEFH…YQNH, IQSL…AMDI, AISL…SREK, PKVL…ITAR, and EACA…QEDI.

It belongs to the Rap family. Homodimer. Interacts with phosphorylated Spo0F. Each RapH protomer is bound to a monomer of Spo0F, forming a heterotetrameric complex. May also interact with non-phosphorylated Spo0F to inhibit the sporulation phosphorelay. Interacts with the C-terminal DNA-binding region of ComA. Does not interact with DegU.

It localises to the cytoplasm. Both activities are inhibited by RapH. Dual specificity regulatory protein that can control both sporulation and competence by acting on two distinct response regulators: Spo0F and ComA, respectively. Is involved in the temporal separation of competence and sporulation. Acts as a phosphatase that specifically dephosphorylates the sporulation initiation phosphotransferase Spo0F and inhibits its activity. RapH can also antagonize sporulation by sterically blocking phosphoryl transfer to and from Spo0F. In addition, inhibits the activity of ComA, a transcriptional factor that regulates the development of genetic competence. Acts by binding to ComA, leading to the inhibition of its DNA-binding activity. The chain is Response regulator aspartate phosphatase H (rapH) from Bacillus subtilis (strain 168).